We begin with the raw amino-acid sequence, 310 residues long: tRNA uridine(34) hydroxylase (310 aa).

One can recognise a Rhodanese domain in the interval 127-225 (KNQNTIVIDT…YLDEISKEEN (99 aa)). The active-site Cysteine persulfide intermediate is the Cys185.

It belongs to the TrhO family.

It catalyses the reaction uridine(34) in tRNA + AH2 + O2 = 5-hydroxyuridine(34) in tRNA + A + H2O. Catalyzes oxygen-dependent 5-hydroxyuridine (ho5U) modification at position 34 in tRNAs. This chain is tRNA uridine(34) hydroxylase, found in Prochlorococcus marinus (strain MIT 9215).